Consider the following 272-residue polypeptide: U11/U12 small nuclear ribonucleoprotein 35 kDa protein (272 aa).

Residues 51–129 enclose the RRM domain; sequence LTLFVSRLSP…REVFVDFELE (79 aa). 2 stretches are compositionally biased toward basic and acidic residues: residues 146 to 162 and 190 to 272; these read GKKE…DRPF and RDRS…EHNR. The segment at 146–272 is disordered; sequence GKKESGQLRF…RKHRSDEHNR (127 aa). Residues 221–258 adopt a coiled-coil conformation; that stretch reads TKDDKEQNAEHTKRERSREQAKNDKDKEKKDSKRERSR.

Its subcellular location is the nucleus. The chain is U11/U12 small nuclear ribonucleoprotein 35 kDa protein (snrnp35) from Xenopus laevis (African clawed frog).